Consider the following 296-residue polypeptide: Protein-export membrane protein SecF (296 aa).

A run of 6 helical transmembrane segments spans residues 23–43, 144–164, 169–189, 194–214, 236–256, and 265–285; these read MIIY…ANYV, AIVY…RVPV, VVFS…IFGI, ATIA…ILLT, GFTM…FSTA, and VLIF…AGVL.

Belongs to the SecD/SecF family. SecF subfamily. As to quaternary structure, part of the protein translocation apparatus. Forms a complex with SecD.

The protein resides in the cell membrane. Involved in protein export. This Pyrococcus furiosus (strain ATCC 43587 / DSM 3638 / JCM 8422 / Vc1) protein is Protein-export membrane protein SecF.